Here is a 452-residue protein sequence, read N- to C-terminus: Phosphoglucosamine mutase 2 (452 aa).

S101 acts as the Phosphoserine intermediate in catalysis. Mg(2+) contacts are provided by S101, D245, D247, and D249. Residue S101 is modified to Phosphoserine.

Belongs to the phosphohexose mutase family. Mg(2+) is required as a cofactor. In terms of processing, activated by phosphorylation.

The catalysed reaction is alpha-D-glucosamine 1-phosphate = D-glucosamine 6-phosphate. Functionally, catalyzes the conversion of glucosamine-6-phosphate to glucosamine-1-phosphate. In Shewanella amazonensis (strain ATCC BAA-1098 / SB2B), this protein is Phosphoglucosamine mutase 2.